The following is a 259-amino-acid chain: Trans-aconitate 2-methyltransferase (259 aa).

Belongs to the methyltransferase superfamily. Tam family.

It localises to the cytoplasm. It catalyses the reaction trans-aconitate + S-adenosyl-L-methionine = (E)-3-(methoxycarbonyl)pent-2-enedioate + S-adenosyl-L-homocysteine. In terms of biological role, catalyzes the S-adenosylmethionine monomethyl esterification of trans-aconitate. In Variovorax paradoxus (strain S110), this protein is Trans-aconitate 2-methyltransferase.